The chain runs to 394 residues: Cell division protein FtsZ (394 aa).

GTP-binding positions include 21–25 (GGGNN), 108–110 (GTG), glutamate 139, arginine 143, and aspartate 187. Residues 317–394 (DKPSSQGRKA…EERRSRRTRR (78 aa)) form a disordered region. Composition is skewed to low complexity over residues 328–346 (STGFGSSVNSSSNHQSGAS) and 353–364 (SAHTSHSQSSES). Over residues 365 to 388 (VNERSHTTKDDDIPSFIRNREERR) the composition is skewed to basic and acidic residues.

The protein belongs to the FtsZ family. Homodimer. Polymerizes to form a dynamic ring structure in a strictly GTP-dependent manner. Interacts directly with several other division proteins.

Its subcellular location is the cytoplasm. Essential cell division protein that forms a contractile ring structure (Z ring) at the future cell division site. The regulation of the ring assembly controls the timing and the location of cell division. One of the functions of the FtsZ ring is to recruit other cell division proteins to the septum to produce a new cell wall between the dividing cells. Binds GTP and shows GTPase activity. In Staphylococcus epidermidis (strain ATCC 12228 / FDA PCI 1200), this protein is Cell division protein FtsZ.